A 245-amino-acid polypeptide reads, in one-letter code: tRNA (guanine-N(1)-)-methyltransferase (245 aa).

Residues Gly-111 and 131 to 136 (MGDYVL) each bind S-adenosyl-L-methionine.

It belongs to the RNA methyltransferase TrmD family. As to quaternary structure, homodimer.

The protein resides in the cytoplasm. The catalysed reaction is guanosine(37) in tRNA + S-adenosyl-L-methionine = N(1)-methylguanosine(37) in tRNA + S-adenosyl-L-homocysteine + H(+). In terms of biological role, specifically methylates guanosine-37 in various tRNAs. The sequence is that of tRNA (guanine-N(1)-)-methyltransferase from Staphylococcus aureus (strain Mu3 / ATCC 700698).